Reading from the N-terminus, the 158-residue chain is MTAIIDVQQAFEGEEVISIDIPSPAELELWANAVLKYEGLSDQEVTIRFTDEAESQSLNSEYRGKHKPTNVLSFPFEAPPGIEINLLGDLVICAPVISREAEEQDKQVSDHYAHMTVHGLLHLMGYDHIDDAEAEEMEGKEIDILAQLGIDNPYDADE.

Residues H118, H122, and H128 each coordinate Zn(2+).

The protein belongs to the endoribonuclease YbeY family. It depends on Zn(2+) as a cofactor.

Its subcellular location is the cytoplasm. Functionally, single strand-specific metallo-endoribonuclease involved in late-stage 70S ribosome quality control and in maturation of the 3' terminus of the 16S rRNA. In Alteromonas mediterranea (strain DSM 17117 / CIP 110805 / LMG 28347 / Deep ecotype), this protein is Endoribonuclease YbeY.